Consider the following 345-residue polypeptide: Succinylglutamate desuccinylase (345 aa).

The Zn(2+) site is built by His63, Glu66, and His160. Glu224 is an active-site residue.

This sequence belongs to the AspA/AstE family. Succinylglutamate desuccinylase subfamily. Zn(2+) is required as a cofactor.

The catalysed reaction is N-succinyl-L-glutamate + H2O = L-glutamate + succinate. It participates in amino-acid degradation; L-arginine degradation via AST pathway; L-glutamate and succinate from L-arginine: step 5/5. In terms of biological role, transforms N(2)-succinylglutamate into succinate and glutamate. This chain is Succinylglutamate desuccinylase, found in Shewanella woodyi (strain ATCC 51908 / MS32).